We begin with the raw amino-acid sequence, 196 residues long: Na(+)-translocating ferredoxin:NAD(+) oxidoreductase complex subunit E (196 aa).

5 consecutive transmembrane segments (helical) span residues 38-58, 68-88, 92-112, 127-147, and 169-189; these read MGMGLATMLVLIGSNVAISAL, IPAFVVVIASFVTIVGMLMKA, ALDAALGIFIPLIVVNCIILA, FADAVGMGLGFTLALTILGSI, and VLLMILPPGAFLTLGLLIGLI.

Belongs to the NqrDE/RnfAE family. In terms of assembly, the complex is composed of six subunits: RnfA, RnfB, RnfC, RnfD, RnfE and RnfG.

The protein resides in the cell membrane. It carries out the reaction 2 reduced [2Fe-2S]-[ferredoxin] + Na(+)(in) + NAD(+) + H(+) = 2 oxidized [2Fe-2S]-[ferredoxin] + Na(+)(out) + NADH. Its function is as follows. Part of a membrane-bound complex that couples electron transfer with translocation of ions across the membrane. Couples electron transfer from reduced ferredoxin to NAD(+) with electrogenic movement of Na(+) out of the cell. Involved in caffeate respiration. This is Na(+)-translocating ferredoxin:NAD(+) oxidoreductase complex subunit E from Acetobacterium woodii (strain ATCC 29683 / DSM 1030 / JCM 2381 / KCTC 1655 / WB1).